We begin with the raw amino-acid sequence, 984 residues long: Putative formate dehydrogenase SAUSA300_2258 (984 aa).

In terms of domain architecture, 2Fe-2S ferredoxin-type spans 3–79 (EHLVVTLDGK…PMTVNTVNND (77 aa)). [2Fe-2S] cluster-binding residues include Cys37, Cys48, Cys51, and Cys63. The region spanning 79–119 (DVKDAQKEALDRILEKHMLYCTVCDYNNGDCEIHNTMDAWG) is the 4Fe-4S His(Cys)3-ligated-type domain. The [4Fe-4S] cluster site is built by His95, Cys99, Cys102, Cys109, Cys147, Cys150, Cys153, Cys157, Cys190, Cys193, Cys196, Cys200, Cys264, Cys267, Cys271, and Cys299. 2 4Fe-4S ferredoxin-type domains span residues 138-165 (PFYR…VNET) and 181-211 (NDVP…VNME). Residues 252–984 (MRKERIKKTK…YVFPGNQVDK (733 aa)) are formate dehydrogenase. A 4Fe-4S Mo/W bis-MGD-type domain is found at 257-313 (IKKTKTVCTYCGVGCSFEVWTKDREILKVQPSHDSPANKIATCVKGKFSWGHINSDQ).

The protein in the C-terminal section; belongs to the prokaryotic molybdopterin-containing oxidoreductase family. [2Fe-2S] cluster serves as cofactor. The cofactor is [4Fe-4S] cluster. Mo-bis(molybdopterin guanine dinucleotide) is required as a cofactor.

The enzyme catalyses formate + NAD(+) = CO2 + NADH. The protein is Putative formate dehydrogenase SAUSA300_2258 of Staphylococcus aureus (strain USA300).